The primary structure comprises 247 residues: Homeobox protein BarH-like 1b (247 aa).

Disordered stretches follow at residues Arg-118–Ser-138 and Gly-197–Glu-247. Residues Gly-135–Val-194 constitute a DNA-binding region (homeobox). Positions Glu-223–Pro-234 are enriched in basic and acidic residues.

It belongs to the BAR homeobox family. In terms of assembly, interacts with serum response factor (SRF). In terms of tissue distribution, expressed in smooth muscle cells of the upper digestive organs and their attached arteries and to craniofacial structures.

The protein localises to the nucleus. In terms of biological role, transcription factor which is involved with the serum response factor (SRF) in the smooth muscle cell-specific transcription of the beta-tropomyosin gene in the upper digestive organs and their attached arteries. The protein is Homeobox protein BarH-like 1b (BARX1B) of Gallus gallus (Chicken).